We begin with the raw amino-acid sequence, 464 residues long: MQYLCQRCHSLINFKDVYDDDLLKLKNLPKSRFVQASSLTEMNESGESDDQMNSSSEDYPAQRLQLYKKTISEGDYNFDNVPPPELRTPTLDSFVVLPAAKDGYEEEKNSPEEVNDLFSWKIEIYNRIFDLLSSKTKVDHPLCVECAELLTEEMSKTLRALKEEKKMYFNYDNFLSSQTVHEENTAALDSEIDELMKQINEKEEKIEEISDETDKLQKLLRELDEEKEKVYAEEQEFYNNLNQFQIKKLSLERQYDCANLEFEHNSRKLEKLQKMNVFSDIFYISHYSEPNGEGSIATINGLRLGRLPSQKVNWAEINAAWGMTVLLLDVLTEKLDFHSSSYQLKPFGSQSFIIRFDRDPNGNQVKPTKLDLFSSGELKIFMNRRFDQGMVAFLDYLHQFGDFCAAKTPSAVLPYAIENDRIGGKCIRLAFNQDENWTRALKFVLTDIKFLEAYVSSQDKQSNF.

Residues 38–57 form a disordered region; it reads SLTEMNESGESDDQMNSSSE. The stretch at 144-274 forms a coiled coil; sequence VECAELLTEE…NSRKLEKLQK (131 aa). The segment at 275 to 461 is BARA; sequence MNVFSDIFYI…EAYVSSQDKQ (187 aa).

It belongs to the beclin family. Component of the autophagy-specific vps34 PI3-kinase complex I composed of vps15, atg6, pik3/vps34, atg14 and atg38. Also a component of the vps34 PI3-kinase complex II composed of atg6, pik3, vps15 and vps38.

Its subcellular location is the endosome membrane. It localises to the vacuole membrane. The protein resides in the preautophagosomal structure membrane. The protein localises to the cytoplasm. In terms of biological role, functions as a part of the autophagy-specific VPS34 PI3-kinase complex I that plays a role in autophagosome assembly. This complex is essential to recruit the atg8-phosphatidylinositol conjugate and the atg12-atg5 conjugate to the pre-autophagosomal structure. Also functions as part of the VPS34 PI3-kinase complex II. The polypeptide is Vacuolar protein sorting-associated protein atg6 (atg6) (Schizosaccharomyces pombe (strain 972 / ATCC 24843) (Fission yeast)).